Reading from the N-terminus, the 253-residue chain is rRNA adenine N-6-methyltransferase (253 aa).

Asparagine 14, leucine 16, glycine 40, glutamate 61, aspartate 85, and asparagine 101 together coordinate S-adenosyl-L-methionine. Positions 229–253 (CAREESTPRPYLPDCTPTTGSISSR) are disordered. Over residues 244 to 253 (TPTTGSISSR) the composition is skewed to polar residues.

This sequence belongs to the class I-like SAM-binding methyltransferase superfamily. rRNA adenine N(6)-methyltransferase family.

Its function is as follows. Involved in erythromycin resistance. The protein is rRNA adenine N-6-methyltransferase (ermA) of Corynebacterium diphtheriae.